A 310-amino-acid chain; its full sequence is Porphobilinogen deaminase (310 aa).

The residue at position 241 (Cys-241) is an S-(dipyrrolylmethanemethyl)cysteine.

This sequence belongs to the HMBS family. In terms of assembly, monomer. The cofactor is dipyrromethane.

It catalyses the reaction 4 porphobilinogen + H2O = hydroxymethylbilane + 4 NH4(+). It participates in porphyrin-containing compound metabolism; protoporphyrin-IX biosynthesis; coproporphyrinogen-III from 5-aminolevulinate: step 2/4. Tetrapolymerization of the monopyrrole PBG into the hydroxymethylbilane pre-uroporphyrinogen in several discrete steps. The sequence is that of Porphobilinogen deaminase from Lysinibacillus sphaericus (strain C3-41).